Consider the following 781-residue polypeptide: Catenin beta-1 (781 aa).

A disordered region spans residues 34-56; sequence GIHSGATTTAPSLSGKGNPEDED. ARM repeat units lie at residues 141 to 180, 225 to 264, 267 to 306, 351 to 390, 391 to 429, 432 to 473, 479 to 519, 521 to 562, 584 to 623, and 625 to 664; these read NYQD…QLSK, REGL…NLLL, EGAK…ILAY, SSNK…NLSD, AATK…NLTC, YKNK…HLTS, EMAQ…NLAL, PANH…QFVE, IHNR…DVAQ, and KEAA…RMSE. Over residues 735–745 the composition is skewed to basic and acidic residues; the sequence is MDHDMGGHHPG. Residues 735 to 781 form a disordered region; it reads MDHDMGGHHPGADYPVDGLPDLSHAQDLMDGLPPGDSNQLAWFDTDL.

It belongs to the beta-catenin family. Interacts with EP-Cadherin/CDH3. Interacts with custos; the interaction is positively regulated by Wnt stimulation. In terms of processing, phosphorylation by gsk3b promotes ubiquitination and subsequent degradation by the proteasome. Post-translationally, ubiquitinated when phosphorylated by gsk3b, leading to its degradation. In terms of tissue distribution, expressed at intercalated disks in the heart (at protein level).

It localises to the cytoplasm. Its subcellular location is the nucleus. The protein localises to the cell membrane. Key downstream component of the canonical Wnt signaling pathway. In the absence of Wnt, forms a complex with axin1, axin2, apc, csnk1a1 and gsk3b that promotes phosphorylation on N-terminal Ser and Thr residues and ubiquitination of ctnnb1 and its subsequent degradation by the proteasome. In the presence of Wnt ligand, ctnnb1 is not ubiquitinated and accumulates in the nucleus, where it acts as a coactivator for transcription factors of the TCF/LEF family, leading to activate Wnt responsive genes. Plays a key role in dorsoventral patterning: in prospective ventral blastomeres, its down-regulation by axin1 and axin2 leads to inhibit the Wnt signaling pathway, while in prospective dorsal blastomeres, degradation of axin results in stabilization and nuclear translocation of ctnnb1. The chain is Catenin beta-1 from Xenopus laevis (African clawed frog).